The chain runs to 183 residues: Beta-defensin 129 (183 aa).

Positions 1 to 19 are cleaved as a signal peptide; sequence MKLLFPIFASLMLQYQVNT. 3 disulfides stabilise this stretch: C27–C53, C34–C48, and C38–C54. Residues 142–183 form a disordered region; the sequence is ATSAKSNTKESGDSATASPPPAPPPPNILPTPSLELEEAEEQ. Residues 159 to 170 show a composition bias toward pro residues; sequence SPPPAPPPPNIL.

This sequence belongs to the beta-defensin family.

Its subcellular location is the secreted. In terms of biological role, has antibacterial activity. The polypeptide is Beta-defensin 129 (DEFB129) (Macaca fascicularis (Crab-eating macaque)).